We begin with the raw amino-acid sequence, 352 residues long: MSDWKVDPDTRRRLLQLQKIGANKKCMDCGAPNPQWATPKFGAFICLECAGIHRGLGVHISFVRSITMDQFKPEELLRMEKGGNEPLTEWFKSHNIDLSLPQKVKYDNPVAEDYKEKLTCLCEDRVFEEREHLDFDASKLSATSQTAASATPGVAQSREGTPLENRRSATPANSSNGANFQKEKNEAYFAELGKKNQSRPDHLPPSQGGKYQGFGSTPAKPPQERSAGSSNTLSLENFQADPLGTLSRGWGLFSSAVTKSFEDVNETVIKPHVQQWQSGELSEETKRAAAQFGQKFQETSSYGFQAFSNFTKNFNGNAEDSSTAGNTTHTEYQKIDNNDKKNEQDEDKWDDF.

The Arf-GAP domain occupies 11 to 127; sequence RRRLLQLQKI…LTCLCEDRVF (117 aa). Residues 26–49 form a C4-type zinc finger; that stretch reads CMDCGAPNPQWATPKFGAFICLEC. A compositionally biased stretch (low complexity) spans 138–151; the sequence is SKLSATSQTAASAT. Disordered stretches follow at residues 138-181 and 196-231; these read SKLS…ANFQ and NQSR…GSSN. A Phosphothreonine modification is found at Thr-151. A Phosphoserine modification is found at Ser-157. Thr-161 is modified (phosphothreonine). Phosphoserine is present on Ser-168. The segment covering 168 to 179 has biased composition (polar residues); the sequence is SATPANSSNGAN. A Phosphothreonine modification is found at Thr-170. Phosphoserine is present on Ser-260. Positions 315–330 are enriched in polar residues; it reads NGNAEDSSTAGNTTHT. Positions 315–352 are disordered; the sequence is NGNAEDSSTAGNTTHTEYQKIDNNDKKNEQDEDKWDDF. A compositionally biased stretch (basic and acidic residues) spans 331 to 343; sequence EYQKIDNNDKKNE.

It localises to the cytoplasm. It is found in the mitochondrion. The protein localises to the perinuclear region. The protein resides in the golgi apparatus. In terms of biological role, GTPase-activating protein (GAP) for ARF1 and ARF2. Involved in intracellular vesicular transport. Required for transport from the trans-Golgi network. Implicated in the regulation of retrograde transport from the Golgi to the ER and in actin cytoskeletal organization. May be involved in the maintenance of mitochondrial morphology, possibly through organizing the actin cytoskeleton in Saccharomyces. This chain is ADP-ribosylation factor GTPase-activating protein GCS1 (GCS1), found in Saccharomyces cerevisiae (strain ATCC 204508 / S288c) (Baker's yeast).